Consider the following 247-residue polypeptide: Neurotrophic factor BDNF precursor form (247 aa).

Positions 1-18 (MTILFLTMVISYFGCMKA) are cleaved as a signal peptide. Residues 19–128 (APMKEASVRG…AANMSMRVRR (110 aa)) constitute a propeptide that is removed on maturation. Asn-121 is a glycosylation site (N-linked (GlcNAc...) asparagine). Intrachain disulfides connect Cys-141-Cys-208, Cys-186-Cys-237, and Cys-196-Cys-239.

The protein belongs to the NGF-beta family. As to quaternary structure, monomers and homodimers. Binds to NTRK2/TRKB. Can form heterodimers with other neurotrophin family members, such as NTF3 and NTF4 (in vitro), but the physiological relevance of this is not clear. BDNF precursor form: interacts with the heterodimer formed by NGFR and SORCS2. Mature BDNF has much lower affinity for the heterodimer formed by NGFR and SORCS2. In terms of processing, N-glycosylated and glycosulfated, contrary to mature BDNF. Mature BDNF is produced by proteolytic removal of the propeptide, catalyzed by a FURIN family member. In addition, the precursor form is proteolytically cleaved within the propeptide, but this is not an obligatory intermediate for the production of mature BDNF. Can be converted into mature BDNF by plasmin (PLG).

Its subcellular location is the secreted. In terms of biological role, important signaling molecule that activates signaling cascades downstream of NTRK2. During development, promotes the survival and differentiation of selected neuronal populations of the peripheral and central nervous systems. Participates in axonal growth, pathfinding and in the modulation of dendritic growth and morphology. Major regulator of synaptic transmission and plasticity at adult synapses in many regions of the CNS. The versatility of BDNF is emphasized by its contribution to a range of adaptive neuronal responses including long-term potentiation (LTP), long-term depression (LTD), certain forms of short-term synaptic plasticity, as well as homeostatic regulation of intrinsic neuronal excitability. This Canis lupus familiaris (Dog) protein is Neurotrophic factor BDNF precursor form (BDNF).